Here is a 141-residue protein sequence, read N- to C-terminus: ATP synthase epsilon chain (141 aa).

Belongs to the ATPase epsilon chain family. F-type ATPases have 2 components, CF(1) - the catalytic core - and CF(0) - the membrane proton channel. CF(1) has five subunits: alpha(3), beta(3), gamma(1), delta(1), epsilon(1). CF(0) has three main subunits: a, b and c.

Its subcellular location is the cell inner membrane. Produces ATP from ADP in the presence of a proton gradient across the membrane. This Cellvibrio japonicus (strain Ueda107) (Pseudomonas fluorescens subsp. cellulosa) protein is ATP synthase epsilon chain.